We begin with the raw amino-acid sequence, 114 residues long: Class I hydrophobin 1 (114 aa).

The first 20 residues, 1 to 20 (MQFTKMSAFATLALATLAAA), serve as a signal peptide directing secretion. Intrachain disulfides connect cysteine 33–cysteine 93, cysteine 40–cysteine 87, cysteine 41–cysteine 74, and cysteine 94–cysteine 107.

The protein belongs to the fungal hydrophobin family. Self-assembles to form functional amyloid fibrils called rodlets. Self-assembly into fibrillar rodlets occurs spontaneously at hydrophobic:hydrophilic interfaces and the rodlets further associate laterally to form amphipathic monolayers.

The protein resides in the secreted. It localises to the cell wall. In terms of biological role, aerial growth, conidiation, and dispersal of filamentous fungi in the environment rely upon a capability of their secreting small amphipathic proteins called hydrophobins (HPBs) with low sequence identity. Class I can self-assemble into an outermost layer of rodlet bundles on aerial cell surfaces, conferring cellular hydrophobicity that supports fungal growth, development and dispersal; whereas Class II form highly ordered films at water-air interfaces through intermolecular interactions but contribute nothing to the rodlet structure. Pnh1 is a class I hydrophobin that might be involved in the attachment of the hydrophilic wall of hyphae to the hydrophobic surface of wood under inorganic phosphate (Pi)-deficient conditions and enable the mycelium to degrade efficiently the components of wood and to acquire nutrients containing Pi. This Pholiota nameko protein is Class I hydrophobin 1.